Consider the following 471-residue polypeptide: Glycosyl hydrolase family 109 protein 1 (471 aa).

A signal peptide spans 1-15 (MIKNLSTFFVGIALS). A lipid anchor (N-palmitoyl cysteine) is attached at Cys-16. Residue Cys-16 is the site of S-diacylglycerol cysteine attachment. Residues 70–71 (MR), Asp-92, 141–144 (WKHH), 161–162 (EV), and Asn-190 each bind NAD(+). Substrate-binding positions include Tyr-219, Arg-235, 247 to 250 (YATH), and Tyr-325. Tyr-247 serves as a coordination point for NAD(+).

This sequence belongs to the Gfo/Idh/MocA family. Glycosyl hydrolase 109 subfamily. NAD(+) is required as a cofactor.

It localises to the cell membrane. In terms of biological role, glycosidase. The protein is Glycosyl hydrolase family 109 protein 1 of Phocaeicola vulgatus (strain ATCC 8482 / DSM 1447 / JCM 5826 / CCUG 4940 / NBRC 14291 / NCTC 11154) (Bacteroides vulgatus).